We begin with the raw amino-acid sequence, 65 residues long: uncharacterized protein (65 aa).

2 helical membrane passes run 4 to 24 (TIWL…MLYP) and 45 to 65 (FGGG…KTIG).

The protein localises to the cell membrane. This is an uncharacterized protein from Escherichia coli O157:H7.